Consider the following 181-residue polypeptide: Large ribosomal subunit protein uL6 (181 aa).

This sequence belongs to the universal ribosomal protein uL6 family. In terms of assembly, part of the 50S ribosomal subunit.

In terms of biological role, this protein binds to the 23S rRNA, and is important in its secondary structure. It is located near the subunit interface in the base of the L7/L12 stalk, and near the tRNA binding site of the peptidyltransferase center. The chain is Large ribosomal subunit protein uL6 from Phytoplasma mali (strain AT).